A 250-amino-acid chain; its full sequence is ATP synthase subunit a (250 aa).

A run of 5 helical transmembrane segments spans residues 27 to 47 (TDTVLSTAIAALIVLALAFYL), 83 to 103 (IAPFVLPLAVTIFVFILISNW), 129 to 149 (INYVLALALFVFVCYHAAGIW), 191 to 211 (IFAGSILVALIALFPPYIMWA), and 219 to 239 (FDLFVGAIQAFIFALLTILYF).

The protein belongs to the ATPase A chain family. As to quaternary structure, F-type ATPases have 2 components, CF(1) - the catalytic core - and CF(0) - the membrane proton channel. CF(1) has five subunits: alpha(3), beta(3), gamma(1), delta(1), epsilon(1). CF(0) has three main subunits: a(1), b(2) and c(9-12). The alpha and beta chains form an alternating ring which encloses part of the gamma chain. CF(1) is attached to CF(0) by a central stalk formed by the gamma and epsilon chains, while a peripheral stalk is formed by the delta and b chains.

It localises to the cell membrane. Its function is as follows. Key component of the proton channel; it plays a direct role in the translocation of protons across the membrane. The sequence is that of ATP synthase subunit a from Mycobacterium ulcerans (strain Agy99).